The following is a 385-amino-acid chain: Rubredoxin-NAD(+) reductase (385 aa).

FAD-binding positions include 8 to 11, 32 to 33, Ile-79, Glu-156, Asp-275, and Ile-293; these read AGTA and SR.

The protein belongs to the FAD-dependent oxidoreductase family. In terms of assembly, homodimer. It depends on FAD as a cofactor.

Its subcellular location is the cytoplasm. It catalyses the reaction 2 reduced [rubredoxin] + NAD(+) + H(+) = 2 oxidized [rubredoxin] + NADH. It functions in the pathway hydrocarbon metabolism; alkane degradation. In terms of biological role, involved in the hydrocarbon hydroxylating system, which transfers electrons from NADH to rubredoxin reductase and then through rubredoxin to alkane 1 monooxygenase. This Ectopseudomonas oleovorans (Pseudomonas oleovorans) protein is Rubredoxin-NAD(+) reductase (alkT).